Reading from the N-terminus, the 1906-residue chain is Alpha-2-macroglobulin homolog (1906 aa).

Residues 1–21 (MIIRVCIRCFIVLTLVLGIGG) form the signal peptide. C22 carries N-palmitoyl cysteine lipidation. The S-diacylglycerol cysteine moiety is linked to residue C22.

It belongs to the protease inhibitor I39 (alpha-2-macroglobulin) family. Bacterial alpha-2-macroglobulin subfamily.

Its subcellular location is the cell membrane. The protein is Alpha-2-macroglobulin homolog of Nostoc sp. (strain PCC 7120 / SAG 25.82 / UTEX 2576).